Consider the following 335-residue polypeptide: Ornithine carbamoyltransferase (335 aa).

Carbamoyl phosphate contacts are provided by residues 56 to 59 (STRT), Gln-83, Arg-107, and 134 to 137 (HPTQ). L-ornithine is bound by residues Asn-168, Asp-232, and 236 to 237 (SM). Residues 274 to 275 (CL) and Arg-320 contribute to the carbamoyl phosphate site.

This sequence belongs to the aspartate/ornithine carbamoyltransferase superfamily. OTCase family.

The protein localises to the cytoplasm. The enzyme catalyses carbamoyl phosphate + L-ornithine = L-citrulline + phosphate + H(+). It functions in the pathway amino-acid biosynthesis; L-arginine biosynthesis; L-arginine from L-ornithine and carbamoyl phosphate: step 1/3. Its function is as follows. Reversibly catalyzes the transfer of the carbamoyl group from carbamoyl phosphate (CP) to the N(epsilon) atom of ornithine (ORN) to produce L-citrulline. In Yersinia pseudotuberculosis serotype I (strain IP32953), this protein is Ornithine carbamoyltransferase.